A 121-amino-acid polypeptide reads, in one-letter code: NAD(P)H-quinone oxidoreductase subunit 3, chloroplastic (121 aa).

Transmembrane regions (helical) follow at residues 10–30, 65–85, and 90–110; these read FFIFLLLASVIPILAFSISKF, MFALVFVIFDVETVFLYPWAM, and LGLSAFIEALVFVFILIIGLV.

Belongs to the complex I subunit 3 family. In terms of assembly, NDH is composed of at least 16 different subunits, 5 of which are encoded in the nucleus.

Its subcellular location is the plastid. The protein resides in the chloroplast thylakoid membrane. It carries out the reaction a plastoquinone + NADH + (n+1) H(+)(in) = a plastoquinol + NAD(+) + n H(+)(out). It catalyses the reaction a plastoquinone + NADPH + (n+1) H(+)(in) = a plastoquinol + NADP(+) + n H(+)(out). In terms of biological role, NDH shuttles electrons from NAD(P)H:plastoquinone, via FMN and iron-sulfur (Fe-S) centers, to quinones in the photosynthetic chain and possibly in a chloroplast respiratory chain. The immediate electron acceptor for the enzyme in this species is believed to be plastoquinone. Couples the redox reaction to proton translocation, and thus conserves the redox energy in a proton gradient. This is NAD(P)H-quinone oxidoreductase subunit 3, chloroplastic from Physcomitrium patens (Spreading-leaved earth moss).